The sequence spans 614 residues: Dihydroxy-acid dehydratase (614 aa).

Mg(2+) is bound at residue D81. Residue C122 coordinates [2Fe-2S] cluster. 2 residues coordinate Mg(2+): D123 and K124. K124 is modified (N6-carboxylysine). C193 lines the [2Fe-2S] cluster pocket. E489 provides a ligand contact to Mg(2+). The active-site Proton acceptor is the S515.

It belongs to the IlvD/Edd family. Homodimer. Requires [2Fe-2S] cluster as cofactor. The cofactor is Mg(2+).

It catalyses the reaction (2R)-2,3-dihydroxy-3-methylbutanoate = 3-methyl-2-oxobutanoate + H2O. The catalysed reaction is (2R,3R)-2,3-dihydroxy-3-methylpentanoate = (S)-3-methyl-2-oxopentanoate + H2O. It participates in amino-acid biosynthesis; L-isoleucine biosynthesis; L-isoleucine from 2-oxobutanoate: step 3/4. The protein operates within amino-acid biosynthesis; L-valine biosynthesis; L-valine from pyruvate: step 3/4. In terms of biological role, functions in the biosynthesis of branched-chain amino acids. Catalyzes the dehydration of (2R,3R)-2,3-dihydroxy-3-methylpentanoate (2,3-dihydroxy-3-methylvalerate) into 2-oxo-3-methylpentanoate (2-oxo-3-methylvalerate) and of (2R)-2,3-dihydroxy-3-methylbutanoate (2,3-dihydroxyisovalerate) into 2-oxo-3-methylbutanoate (2-oxoisovalerate), the penultimate precursor to L-isoleucine and L-valine, respectively. The sequence is that of Dihydroxy-acid dehydratase from Marinomonas sp. (strain MWYL1).